The chain runs to 420 residues: CinA-like protein (420 aa).

This sequence belongs to the CinA family.

This is CinA-like protein from Chlorobium phaeobacteroides (strain BS1).